Consider the following 350-residue polypeptide: (RS)-norcoclaurine 6-O-methyltransferase (350 aa).

Met166 is a binding site for S-adenosyl-L-methionine. Asp169 provides a ligand contact to substrate. Residues Thr170, Gly195, Asp218, 238–239, and Lys252 contribute to the S-adenosyl-L-methionine site; that span reads DM. Substrate is bound by residues 253–257 and Asp306; that span reads CILHD. His256 serves as the catalytic Proton acceptor.

It belongs to the class I-like SAM-binding methyltransferase superfamily. Cation-independent O-methyltransferase family. COMT subfamily. Homodimer. In terms of tissue distribution, expressed in leaf primordia of rhizomes and root endodermis.

The enzyme catalyses (S)-norcoclaurine + S-adenosyl-L-methionine = (S)-coclaurine + S-adenosyl-L-homocysteine + H(+). It carries out the reaction norcoclaurine + S-adenosyl-L-methionine = coclaurine + S-adenosyl-L-homocysteine + H(+). With respect to regulation, inhibited by sanguinarine. In terms of biological role, involved in the biosynthesis of coclaurine, a precursor of benzylisoquinoline alkaloids. Catalyzes the transfer of the S-methyl group of S-adenosyl-L-methionine (AdoMet) to the 6-hydroxyl group of norcoclaurine to form coclaurine. The polypeptide is (RS)-norcoclaurine 6-O-methyltransferase (Thalictrum flavum subsp. glaucum (Yellow meadow rue)).